A 545-amino-acid chain; its full sequence is Chaperonin GroEL (545 aa).

ATP contacts are provided by residues threonine 30–proline 33, lysine 51, aspartate 87–threonine 91, glycine 415, and aspartate 494.

The protein belongs to the chaperonin (HSP60) family. Forms a cylinder of 14 subunits composed of two heptameric rings stacked back-to-back. Interacts with the co-chaperonin GroES.

The protein localises to the cytoplasm. It carries out the reaction ATP + H2O + a folded polypeptide = ADP + phosphate + an unfolded polypeptide.. Its function is as follows. Together with its co-chaperonin GroES, plays an essential role in assisting protein folding. The GroEL-GroES system forms a nano-cage that allows encapsulation of the non-native substrate proteins and provides a physical environment optimized to promote and accelerate protein folding. This Helicobacter hepaticus (strain ATCC 51449 / 3B1) protein is Chaperonin GroEL.